The chain runs to 533 residues: Retinoid isomerohydrolase (533 aa).

Position 2 is an N-acetylserine (Ser-2). Phosphothreonine is present on residues Thr-101 and Thr-105. Cys-112 carries S-palmitoyl cysteine; in membrane form lipidation. Lys-113 is subject to N6-acetyllysine. Ser-117 is subject to Phosphoserine. His-180 is a binding site for Fe cation. Residue Cys-231 is the site of S-palmitoyl cysteine; in membrane form attachment. His-241 and His-313 together coordinate Fe cation. S-palmitoyl cysteine; in membrane form attachment occurs at residues Cys-329 and Cys-330. Residue His-527 coordinates Fe cation.

Belongs to the carotenoid oxygenase family. As to quaternary structure, interacts with MYO7A; this mediates light-dependent intracellular transport of RPE65. It depends on Fe(2+) as a cofactor. Post-translationally, palmitoylation by LRAT regulates ligand binding specificity; the palmitoylated form (membrane form) specifically binds all-trans-retinyl-palmitate, while the soluble unpalmitoylated form binds all-trans-retinol (vitamin A). Retinal pigment epithelium specific.

The protein localises to the cytoplasm. It is found in the cell membrane. Its subcellular location is the microsome membrane. The enzyme catalyses an all-trans-retinyl ester + H2O = 11-cis-retinol + a fatty acid + H(+). It catalyses the reaction lutein = (3R,3'S)-zeaxanthin. It carries out the reaction all-trans-retinyl hexadecanoate + H2O = 11-cis-retinol + hexadecanoate + H(+). In terms of biological role, critical isomerohydrolase in the retinoid cycle involved in regeneration of 11-cis-retinal, the chromophore of rod and cone opsins. Catalyzes the cleavage and isomerization of all-trans-retinyl fatty acid esters to 11-cis-retinol which is further oxidized by 11-cis retinol dehydrogenase to 11-cis-retinal for use as visual chromophore. Essential for the production of 11-cis retinal for both rod and cone photoreceptors. Also capable of catalyzing the isomerization of lutein to meso-zeaxanthin an eye-specific carotenoid. The soluble form binds vitamin A (all-trans-retinol), making it available for LRAT processing to all-trans-retinyl ester. The membrane form, palmitoylated by LRAT, binds all-trans-retinyl esters, making them available for IMH (isomerohydrolase) processing to all-cis-retinol. The soluble form is regenerated by transferring its palmitoyl groups onto 11-cis-retinol, a reaction catalyzed by LRAT. The chain is Retinoid isomerohydrolase (Rpe65) from Mus musculus (Mouse).